A 307-amino-acid chain; its full sequence is Dihydroorotate dehydrogenase B (NAD(+)), catalytic subunit (307 aa).

FMN contacts are provided by residues Ser-21 and 45–46 (KA). Substrate is bound by residues Lys-45 and 69 to 73 (NAIGL). The FMN site is built by Asn-101 and Asn-129. Asn-129 is a binding site for substrate. Residue Cys-132 is the Nucleophile of the active site. Lys-167 and Ile-193 together coordinate FMN. Residue 194–195 (NT) coordinates substrate. FMN is bound by residues Gly-219, 245–246 (GG), and 267–268 (GT).

Belongs to the dihydroorotate dehydrogenase family. Type 1 subfamily. As to quaternary structure, heterotetramer of 2 PyrK and 2 PyrD type B subunits. FMN is required as a cofactor.

The protein resides in the cytoplasm. The enzyme catalyses (S)-dihydroorotate + NAD(+) = orotate + NADH + H(+). The protein operates within pyrimidine metabolism; UMP biosynthesis via de novo pathway; orotate from (S)-dihydroorotate (NAD(+) route): step 1/1. Catalyzes the conversion of dihydroorotate to orotate with NAD(+) as electron acceptor. This Cutibacterium acnes (strain DSM 16379 / KPA171202) (Propionibacterium acnes) protein is Dihydroorotate dehydrogenase B (NAD(+)), catalytic subunit (pyrD).